The primary structure comprises 473 residues: Flavonol 3-O-glucosyltransferase UGT89B1 (473 aa).

Histidine 25 (proton acceptor) is an active-site residue. Residue histidine 25 participates in an anthocyanidin binding. The Charge relay role is filled by aspartate 127. UDP-alpha-D-glucose is bound by residues alanine 348, glutamine 350, histidine 365, tryptophan 368, asparagine 369, serine 370, and glutamate 373. Alanine 388 is a binding site for an anthocyanidin. UDP-alpha-D-glucose is bound by residues aspartate 389 and glutamine 390.

Belongs to the UDP-glycosyltransferase family.

It carries out the reaction a flavonol + UDP-alpha-D-glucose = a flavonol 3-O-beta-D-glucoside + UDP + H(+). The enzyme catalyses a 7-O-hydroxy-flavonol + UDP-alpha-D-glucose = a flavonol 7-O-beta-D-glucoside + UDP + H(+). Its function is as follows. Possesses quercetin 3-O-glucosyltransferase, 7-O-glucosyltransferase and 4'-O-glucosyltransferase activities in vitro. Also active in vitro on benzoates and benzoate derivatives. The chain is Flavonol 3-O-glucosyltransferase UGT89B1 from Arabidopsis thaliana (Mouse-ear cress).